We begin with the raw amino-acid sequence, 220 residues long: Probable nicotinate-nucleotide adenylyltransferase (220 aa).

This sequence belongs to the NadD family.

It carries out the reaction nicotinate beta-D-ribonucleotide + ATP + H(+) = deamido-NAD(+) + diphosphate. Its pathway is cofactor biosynthesis; NAD(+) biosynthesis; deamido-NAD(+) from nicotinate D-ribonucleotide: step 1/1. Functionally, catalyzes the reversible adenylation of nicotinate mononucleotide (NaMN) to nicotinic acid adenine dinucleotide (NaAD). The polypeptide is Probable nicotinate-nucleotide adenylyltransferase (Yersinia pseudotuberculosis serotype O:1b (strain IP 31758)).